The following is a 114-amino-acid chain: Large ribosomal subunit protein uL22 (114 aa).

This sequence belongs to the universal ribosomal protein uL22 family. Part of the 50S ribosomal subunit.

This protein binds specifically to 23S rRNA; its binding is stimulated by other ribosomal proteins, e.g. L4, L17, and L20. It is important during the early stages of 50S assembly. It makes multiple contacts with different domains of the 23S rRNA in the assembled 50S subunit and ribosome. In terms of biological role, the globular domain of the protein is located near the polypeptide exit tunnel on the outside of the subunit, while an extended beta-hairpin is found that lines the wall of the exit tunnel in the center of the 70S ribosome. The polypeptide is Large ribosomal subunit protein uL22 (Streptococcus sanguinis (strain SK36)).